The chain runs to 138 residues: Large ribosomal subunit protein bL17 (138 aa).

Belongs to the bacterial ribosomal protein bL17 family. As to quaternary structure, part of the 50S ribosomal subunit. Contacts protein L32.

This is Large ribosomal subunit protein bL17 from Phenylobacterium zucineum (strain HLK1).